Consider the following 379-residue polypeptide: UDP-N-acetylglucosamine--N-acetylmuramyl-(pentapeptide) pyrophosphoryl-undecaprenol N-acetylglucosamine transferase (379 aa).

UDP-N-acetyl-alpha-D-glucosamine contacts are provided by residues 17-19 (TGG), Asn128, Arg169, Ser197, and Gln298.

This sequence belongs to the glycosyltransferase 28 family. MurG subfamily.

Its subcellular location is the cell inner membrane. The catalysed reaction is di-trans,octa-cis-undecaprenyl diphospho-N-acetyl-alpha-D-muramoyl-L-alanyl-D-glutamyl-meso-2,6-diaminopimeloyl-D-alanyl-D-alanine + UDP-N-acetyl-alpha-D-glucosamine = di-trans,octa-cis-undecaprenyl diphospho-[N-acetyl-alpha-D-glucosaminyl-(1-&gt;4)]-N-acetyl-alpha-D-muramoyl-L-alanyl-D-glutamyl-meso-2,6-diaminopimeloyl-D-alanyl-D-alanine + UDP + H(+). It participates in cell wall biogenesis; peptidoglycan biosynthesis. Cell wall formation. Catalyzes the transfer of a GlcNAc subunit on undecaprenyl-pyrophosphoryl-MurNAc-pentapeptide (lipid intermediate I) to form undecaprenyl-pyrophosphoryl-MurNAc-(pentapeptide)GlcNAc (lipid intermediate II). This is UDP-N-acetylglucosamine--N-acetylmuramyl-(pentapeptide) pyrophosphoryl-undecaprenol N-acetylglucosamine transferase from Brucella suis (strain ATCC 23445 / NCTC 10510).